Consider the following 264-residue polypeptide: Thiazole synthase (264 aa).

The active-site Schiff-base intermediate with DXP is Lys-106. 1-deoxy-D-xylulose 5-phosphate contacts are provided by residues Gly-167, 193 to 194 (AG), and 215 to 216 (NT).

This sequence belongs to the ThiG family. As to quaternary structure, homotetramer. Forms heterodimers with either ThiH or ThiS.

It is found in the cytoplasm. It catalyses the reaction [ThiS sulfur-carrier protein]-C-terminal-Gly-aminoethanethioate + 2-iminoacetate + 1-deoxy-D-xylulose 5-phosphate = [ThiS sulfur-carrier protein]-C-terminal Gly-Gly + 2-[(2R,5Z)-2-carboxy-4-methylthiazol-5(2H)-ylidene]ethyl phosphate + 2 H2O + H(+). Its pathway is cofactor biosynthesis; thiamine diphosphate biosynthesis. Catalyzes the rearrangement of 1-deoxy-D-xylulose 5-phosphate (DXP) to produce the thiazole phosphate moiety of thiamine. Sulfur is provided by the thiocarboxylate moiety of the carrier protein ThiS. In vitro, sulfur can be provided by H(2)S. In Stenotrophomonas maltophilia (strain K279a), this protein is Thiazole synthase.